A 511-amino-acid chain; its full sequence is GMP synthase [glutamine-hydrolyzing] (511 aa).

A Glutamine amidotransferase type-1 domain is found at 5–195 (AILVLDFGSQ…VFKICQAQIN (191 aa)). C82 (nucleophile) is an active-site residue. Active-site residues include H169 and E171. Positions 196-386 (WSLEGNLETI…LGIKKESLYR (191 aa)) constitute a GMPS ATP-PPase domain. Residue 223–229 (SGGTDSL) coordinates ATP.

As to quaternary structure, homodimer.

The enzyme catalyses XMP + L-glutamine + ATP + H2O = GMP + L-glutamate + AMP + diphosphate + 2 H(+). It participates in purine metabolism; GMP biosynthesis; GMP from XMP (L-Gln route): step 1/1. Its function is as follows. Catalyzes the synthesis of GMP from XMP. This is GMP synthase [glutamine-hydrolyzing] (guaA) from Borreliella burgdorferi (strain N40) (Borrelia burgdorferi).